The chain runs to 599 residues: Sulfite reductase [NADPH] flavoprotein alpha-component (599 aa).

In terms of domain architecture, Flavodoxin-like spans 64–202; it reads ITIISASQTG…AASEWRARVV (139 aa). FMN is bound by residues 70–75, 117–120, and 153–162; these read SQTGNA, STQG, and LGDSSYEFFC. The region spanning 234–448 is the FAD-binding FR-type domain; that stretch reads DSPLVASLSV…IEHNDNFRLP (215 aa). Residues T322, A356, 386–389, 404–406, Y410, and 419–422 contribute to the FAD site; these read RLYS, TVG, and GGAS. NADP(+)-binding positions include 519–520, 525–529, and D561; these read SR and KVYVQ. Y599 serves as a coordination point for FAD.

This sequence belongs to the NADPH-dependent sulphite reductase flavoprotein subunit CysJ family. It in the N-terminal section; belongs to the flavodoxin family. In the C-terminal section; belongs to the flavoprotein pyridine nucleotide cytochrome reductase family. As to quaternary structure, alpha(8)-beta(8). The alpha component is a flavoprotein, the beta component is a hemoprotein. FAD serves as cofactor. FMN is required as a cofactor.

The catalysed reaction is hydrogen sulfide + 3 NADP(+) + 3 H2O = sulfite + 3 NADPH + 4 H(+). It participates in sulfur metabolism; hydrogen sulfide biosynthesis; hydrogen sulfide from sulfite (NADPH route): step 1/1. Functionally, component of the sulfite reductase complex that catalyzes the 6-electron reduction of sulfite to sulfide. This is one of several activities required for the biosynthesis of L-cysteine from sulfate. The flavoprotein component catalyzes the electron flow from NADPH -&gt; FAD -&gt; FMN to the hemoprotein component. In Escherichia coli O9:H4 (strain HS), this protein is Sulfite reductase [NADPH] flavoprotein alpha-component.